The primary structure comprises 133 residues: Arsenate reductase 1 (133 aa).

Residues C10, C82, and C89 each act as nucleophile in the active site. Cystine bridges form between C10–C82 and C82–C89.

This sequence belongs to the low molecular weight phosphotyrosine protein phosphatase family. Thioredoxin-coupled ArsC subfamily.

It is found in the cytoplasm. It carries out the reaction arsenate + [thioredoxin]-dithiol + H(+) = arsenite + [thioredoxin]-disulfide + H2O. Catalyzes the reduction of arsenate [As(V)] to arsenite [As(III)]. The protein is Arsenate reductase 1 of Staphylococcus haemolyticus (strain JCSC1435).